The following is a 371-amino-acid chain: Histidinol-phosphate aminotransferase (371 aa).

Lysine 227 carries the post-translational modification N6-(pyridoxal phosphate)lysine.

It belongs to the class-II pyridoxal-phosphate-dependent aminotransferase family. Histidinol-phosphate aminotransferase subfamily. Homodimer. Requires pyridoxal 5'-phosphate as cofactor.

It catalyses the reaction L-histidinol phosphate + 2-oxoglutarate = 3-(imidazol-4-yl)-2-oxopropyl phosphate + L-glutamate. It participates in amino-acid biosynthesis; L-histidine biosynthesis; L-histidine from 5-phospho-alpha-D-ribose 1-diphosphate: step 7/9. The sequence is that of Histidinol-phosphate aminotransferase from Sphingopyxis alaskensis (strain DSM 13593 / LMG 18877 / RB2256) (Sphingomonas alaskensis).